The chain runs to 241 residues: Phosducin-like protein 2 (241 aa).

Residues 34-202 (VLRLQKEAMV…EWKLAEVGAI (169 aa)) enclose the Phosducin domain. The segment at 89 to 241 (FGELREISGN…DSSNSDNDTK (153 aa)) is thioredoxin fold.

The protein belongs to the phosducin family. In terms of assembly, interacts with the CCT chaperonin complex and actin. Testis-specific.

Its subcellular location is the endoplasmic reticulum. In terms of biological role, essential for male fertility, spermiogenesis and acrosome formation. In Homo sapiens (Human), this protein is Phosducin-like protein 2 (PDCL2).